Reading from the N-terminus, the 212-residue chain is MDSSNSTKETGDIPIPVTSSKSSKAAPPPVVAAKAKSTTKQPLVSGWKRGLGIIDFILRICAIAAALAAATAMGTTSQQLPFFTQFFQFKADYNDLPAFTFFVIANAMAGAYLVLSLPFSILCIVRPHILGARLMLLVFDTVAVPLVTAAASAAASIVYLAHNGNSDANWVAICRQFNDFCQRVSGAVVASFITALLFVVLVAVSAVALRQK.

The disordered stretch occupies residues 1–28; that stretch reads MDSSNSTKETGDIPIPVTSSKSSKAAPP. Over 1 to 49 the chain is Cytoplasmic; sequence MDSSNSTKETGDIPIPVTSSKSSKAAPPPVVAAKAKSTTKQPLVSGWKR. Low complexity predominate over residues 16–28; it reads PVTSSKSSKAAPP. A helical membrane pass occupies residues 50-70; that stretch reads GLGIIDFILRICAIAAALAAA. Topologically, residues 71–100 are extracellular; it reads TAMGTTSQQLPFFTQFFQFKADYNDLPAFT. A helical membrane pass occupies residues 101–121; it reads FFVIANAMAGAYLVLSLPFSI. Topologically, residues 122–133 are cytoplasmic; sequence LCIVRPHILGAR. The helical transmembrane segment at 134-154 threads the bilayer; that stretch reads LMLLVFDTVAVPLVTAAASAA. Over 155-186 the chain is Extracellular; that stretch reads ASIVYLAHNGNSDANWVAICRQFNDFCQRVSG. A helical transmembrane segment spans residues 187–207; it reads AVVASFITALLFVVLVAVSAV. Over 208–212 the chain is Cytoplasmic; it reads ALRQK.

This sequence belongs to the Casparian strip membrane proteins (CASP) family. Homodimer and heterodimers.

It is found in the cell membrane. Functionally, regulates membrane-cell wall junctions and localized cell wall deposition. Required for establishment of the Casparian strip membrane domain (CSD) and the subsequent formation of Casparian strips, a cell wall modification of the root endodermis that determines an apoplastic barrier between the intraorganismal apoplasm and the extraorganismal apoplasm and prevents lateral diffusion. This Helianthus annuus (Common sunflower) protein is Casparian strip membrane protein 1.